Here is a 295-residue protein sequence, read N- to C-terminus: Sulfotransferase 1 family member D1 (295 aa).

3'-phosphoadenylyl sulfate is bound at residue 48 to 53 (KSGTTW). Residues phenylalanine 81 and 106–108 (KTH) contribute to the substrate site. Histidine 108 acts as the Proton acceptor in catalysis. 3'-phosphoadenylyl sulfate-binding residues include arginine 130 and serine 138. Phenylalanine 142 lines the substrate pocket. Residues tyrosine 193, 227–232 (SSFSVM), and 257–259 (RKG) contribute to the 3'-phosphoadenylyl sulfate site.

The protein belongs to the sulfotransferase 1 family. In terms of tissue distribution, detected in kidney and liver. Detected in kidney collecting duct cells.

The protein resides in the cytoplasm. Functionally, sulfotransferase with broad substrate specificity that utilizes 3'-phospho-5'-adenylyl sulfate (PAPS) as sulfonate donor to catalyze the sulfate conjugation of catecholamines, such as dopamine, prostaglandins, leukotriene E4, drugs and xenobiotic compounds. Has sulfotransferase activity towards p-nitrophenol, 2-naphthylamine and minoxidil (in vitro). Sulfonation increases the water solubility of most compounds, and therefore their renal excretion, but it can also result in bioactivation to form active metabolites. The chain is Sulfotransferase 1 family member D1 (Sult1d1) from Mus musculus (Mouse).